Here is a 281-residue protein sequence, read N- to C-terminus: Ermin (281 aa).

3 stretches are compositionally biased toward polar residues: residues 1-12 (MTDTPETLSGTE), 21-31 (NGQQPSSQTRQ), and 135-147 (AQQQLEQRGDAST). Disordered stretches follow at residues 1 to 80 (MTDT…KILN), 110 to 147 (REGHPWKKIPPNSSNLEVSRQKERTAQQQLEQRGDAST), and 167 to 248 (KCDE…GDIA). Acidic residues predominate over residues 169 to 197 (DEEEEEEEEVWNEEINEEDVDECAEEEDE). The span at 198–223 (VRVIEFKRKHREGSPLKEESLAREDS) shows a compositional bias: basic and acidic residues. 4 positions are modified to phosphoserine: S211, S223, S227, and S230. Residue T234 is modified to Phosphothreonine. Positions 262-281 (KIRKGNTKQRIDEFESMMHL) are binds actin.

Binds actin. As to expression, brain and spinal cord. Exclusively expressed by the oligodendrocytes. Appears at a late stage during myelination, and in the mature nerves, it is localized to the outer cytoplasmic lip of the myelin sheath and the paranodal loops.

Its subcellular location is the cytoplasm. The protein resides in the cytoskeleton. Plays a role in cytoskeletal rearrangements during the late wrapping and/or compaction phases of myelinogenesis as well as in maintenance and stability of myelin sheath in the adult. May play an important role in late-stage oligodendroglia maturation, myelin/Ranvier node formation during CNS development, and in the maintenance and plasticity of related structures in the mature CNS. The chain is Ermin (Ermn) from Mus musculus (Mouse).